A 101-amino-acid polypeptide reads, in one-letter code: Small ribosomal subunit protein uS14 (101 aa).

It belongs to the universal ribosomal protein uS14 family. In terms of assembly, part of the 30S ribosomal subunit. Contacts proteins S3 and S10.

In terms of biological role, binds 16S rRNA, required for the assembly of 30S particles and may also be responsible for determining the conformation of the 16S rRNA at the A site. This chain is Small ribosomal subunit protein uS14, found in Shewanella oneidensis (strain ATCC 700550 / JCM 31522 / CIP 106686 / LMG 19005 / NCIMB 14063 / MR-1).